Here is a 301-residue protein sequence, read N- to C-terminus: N-acetylmuramic acid 6-phosphate etherase (301 aa).

The 164-residue stretch at 57–220 folds into the SIS domain; sequence IAEAFRQGGR…TTGAMIRTGK (164 aa). Glu85 acts as the Proton donor in catalysis. Residue Glu116 is part of the active site.

The protein belongs to the GCKR-like family. MurNAc-6-P etherase subfamily. In terms of assembly, homodimer.

The catalysed reaction is N-acetyl-D-muramate 6-phosphate + H2O = N-acetyl-D-glucosamine 6-phosphate + (R)-lactate. Its pathway is amino-sugar metabolism; 1,6-anhydro-N-acetylmuramate degradation. It functions in the pathway amino-sugar metabolism; N-acetylmuramate degradation. The protein operates within cell wall biogenesis; peptidoglycan recycling. Its function is as follows. Specifically catalyzes the cleavage of the D-lactyl ether substituent of MurNAc 6-phosphate, producing GlcNAc 6-phosphate and D-lactate. Together with AnmK, is also required for the utilization of anhydro-N-acetylmuramic acid (anhMurNAc) either imported from the medium or derived from its own cell wall murein, and thus plays a role in cell wall recycling. The protein is N-acetylmuramic acid 6-phosphate etherase of Photorhabdus laumondii subsp. laumondii (strain DSM 15139 / CIP 105565 / TT01) (Photorhabdus luminescens subsp. laumondii).